The following is a 288-amino-acid chain: Single myb histone 4 (288 aa).

Disordered regions lie at residues 1 to 42 (MGAP…PVLS), 62 to 87 (GLGS…SQPL), and 181 to 206 (DSLA…KPSK). Residues 1 to 60 (MGAPKQKWTSEEEDALRAGVRKHGAGKWRTIQKDPEFSPVLSSRSNIDLKDKWRNLSFSA) enclose the HTH myb-type domain. Positions 28 to 56 (WRTIQKDPEFSPVLSSRSNIDLKDKWRNL) form a DNA-binding region, H-T-H motif. Low complexity predominate over residues 76 to 87 (PSSSPSSSSQPL). An H15 domain is found at 113-181 (TLPKYGAMIM…KIDKSYRLPD (69 aa)). Residues 230-250 (KVADAEAKAHDAHDQTMEAER) adopt a coiled-coil conformation.

Belongs to the histone H1/H5 family. SMH subfamily. As to quaternary structure, forms a homodimer and heterodimers.

Its subcellular location is the nucleus. The protein resides in the chromosome. It is found in the nucleolus. The protein localises to the telomere. Binds preferentially double-stranded telomeric repeats, but may also bind to the single telomeric strand. The protein is Single myb histone 4 (SMH4) of Zea mays (Maize).